Here is a 598-residue protein sequence, read N- to C-terminus: MTEPNLDEDGSKSSFQKTVVLRDWWLIKCPKEFEGKQFGVAGFEESVETRAMRVFTSSPITKALDVFTLLASDGIYITLRGFLNKERVLKNGFNPEISREFIFGFPPCWERVCNSCFEGDSFGTDVNTVPSTIEKACPPILSPCKYSNRNLKDNPAESREKSNVTETDIAEINDKGGSGARDIKTARRRSLHLQIKRILESSKVRKTANDGDHGSEFLNTAKRGDVERDGCEVINNEDSEWKLDESEVQNLCNDGDNGSEGFIKAKSSDVEKDKSEAIDNDVISPAVGSGIKHTGADNVDKVTSASATGESLTSEQQNGLLVTTASPHSLLKDLAKSSKPEKKGISKKSGKILRSDDNVVDPMNYSGTKVKSAENKRKIDASKLQSPTSNVAEHSKEGLNNAKSNDVEKDVCVAINNEVISPVKGFGKRLSGTDVERLTSKNATKESLTSVQRKGRVKVSKAFQDPLSKGKSKKSEKTLQSNSNVVEPMNHFRSEAEEAEENLSWEKIKRKIDFDVEVTPEKKVKQQKTNAASTDSLGQKRSRSGRVLVSSLEFWRNQIPVYDMDRNLIQVKDGSETNSAPSKGKGSDSRKRRNLKIK.

One can recognise an SANTA domain in the interval 19–111; the sequence is VVLRDWWLIK…IFGFPPCWER (93 aa). Basic and acidic residues-rich tracts occupy residues 335 to 344 and 371 to 381; these read AKSSKPEKKG and KSAENKRKIDA. Disordered regions lie at residues 335–403, 445–500, 520–542, and 572–598; these read AKSS…NNAK, KESL…EEAE, PEKK…QKRS, and KDGS…LKIK. Residues 383 to 392 show a composition bias toward polar residues; that stretch reads KLQSPTSNVA. The span at 527–539 shows a compositional bias: polar residues; that stretch reads QKTNAASTDSLGQ. Residues 538-572 form a required for localization at centromeres region; sequence GQKRSRSGRVLVSSLEFWRNQIPVYDMDRNLIQVK.

Belongs to the KNL2 family. In terms of tissue distribution, expressed in shoot apical meristem, leaf primordia, basal parts of emerging leaves, inflorescence meristems, young inflorescences, developing flower buds, developing sepals and pistils, styles and young siliques.

Its subcellular location is the nucleus. The protein resides in the nucleoplasm. It is found in the nuclear body. It localises to the nucleolus. The protein localises to the chromosome. Its subcellular location is the centromere. Its function is as follows. Involved in recognition of centromeres and centromeric localization of the centromere-specific histone CENH3. Required for normal progression of mitosis and meiosis. May play a role in the determination of the epigenetic status of centromeres. Binds DNA and RNA in vitro. In Arabidopsis thaliana (Mouse-ear cress), this protein is Kinetochore-associated protein KNL-2 homolog.